The sequence spans 329 residues: EDTGSEATNNTEVSLPKPPVIENGYVEHMIRYQCKPFYKLHTEGDGVYTLNSEKHWTNKAVGEKLPECEAVCGKPKNPVDQVQRIMGGSVDAKGSFPWQAKMVSHHNLTSGATLINEQWLLTTAKNLFLGHKDDAKANDIAPTLKLYVGKNQLVEVEKVVLHPDYSKVDIGLIKLKQKVPIDERVMPICLPSKDYAEVGRIGYVSGWGRNSNFNFTELLKYVMLPVADQDKCVQHYEGSTVPEKKSPKSPVGVQPILNEHTFCAGMSKFQEDTCYGDAGSAFAVHDQDEDTWYAAGILSFDKSCTVAEYGVYVKVPSVLAWVQETIAGN.

N-linked (GlcNAc...) asparagine glycosylation occurs at Asn-9. A Sushi domain is found at 13–70 (VSLPKPPVIENGYVEHMIRYQCKPFYKLHTEGDGVYTLNSEKHWTNKAVGEKLPECEA). Intrachain disulfides connect Cys-34/Cys-68 and Cys-72/Cys-189. Arg-84 is a propeptide. In terms of domain architecture, Peptidase S1 spans 85–327 (IMGGSVDAKG…VLAWVQETIA (243 aa)). Asn-107 and Asn-214 each carry an N-linked (GlcNAc...) asparagine glycan. Cystine bridges form between Cys-232/Cys-263 and Cys-274/Cys-304. The tract at residues 241–246 (VPEKKS) is interaction with CD163.

Belongs to the peptidase S1 family. As to quaternary structure, tetramer of two alpha and two beta chains; disulfide-linked. The hemoglobin/haptoglobin complex is composed of a haptoglobin dimer bound to two hemoglobin alpha-beta dimers. Interacts with CD163. Interacts with ERGIC3. In terms of tissue distribution, expressed by the liver and secreted in plasma.

It localises to the secreted. Its subcellular location is the extracellular space. Functionally, as a result of hemolysis, hemoglobin is found to accumulate in the kidney and is secreted in the urine. Haptoglobin captures, and combines with free plasma hemoglobin to allow hepatic recycling of heme iron and to prevent kidney damage. Haptoglobin also acts as an antioxidant, has antibacterial activity and plays a role in modulating many aspects of the acute phase response. Hemoglobin/haptoglobin complexes are rapidly cleared by the macrophage CD163 scavenger receptor expressed on the surface of liver Kupfer cells through an endocytic lysosomal degradation pathway. The chain is Haptoglobin (HP) from Canis lupus familiaris (Dog).